Consider the following 481-residue polypeptide: Phosphoglucosamine mutase (481 aa).

The active-site Phosphoserine intermediate is S129. Positions 129, 271, 273, and 275 each coordinate Mg(2+). Position 129 is a phosphoserine (S129).

The protein belongs to the phosphohexose mutase family. Requires Mg(2+) as cofactor. Activated by phosphorylation.

The catalysed reaction is alpha-D-glucosamine 1-phosphate = D-glucosamine 6-phosphate. In terms of biological role, catalyzes the conversion of glucosamine-6-phosphate to glucosamine-1-phosphate. This chain is Phosphoglucosamine mutase, found in Picosynechococcus sp. (strain ATCC 27264 / PCC 7002 / PR-6) (Agmenellum quadruplicatum).